A 282-amino-acid chain; its full sequence is ABC transporter I family member 21 (282 aa).

In terms of domain architecture, ABC transporter spans 13–248 (IRVSGMQFSY…KTSPNLLSVV (236 aa)). 46-53 (GANGSGKT) is an ATP binding site.

It belongs to the ABC transporter superfamily. ABCI family. As to expression, expressed in root elongating zone and root meristem, as well as in elongating etiolated hypocotyls.

It is found in the cytoplasm. This chain is ABC transporter I family member 21 (ABCI21), found in Arabidopsis thaliana (Mouse-ear cress).